The chain runs to 218 residues: Thiopurine S-methyltransferase (218 aa).

Tryptophan 11, leucine 46, glutamate 67, and arginine 122 together coordinate S-adenosyl-L-methionine.

The protein belongs to the class I-like SAM-binding methyltransferase superfamily. TPMT family.

It is found in the cytoplasm. It carries out the reaction S-adenosyl-L-methionine + a thiopurine = S-adenosyl-L-homocysteine + a thiopurine S-methylether.. The sequence is that of Thiopurine S-methyltransferase from Vibrio cholerae serotype O1 (strain ATCC 39315 / El Tor Inaba N16961).